The primary structure comprises 109 residues: Large ribosomal subunit protein uL22 (109 aa).

It belongs to the universal ribosomal protein uL22 family. In terms of assembly, part of the 50S ribosomal subunit.

In terms of biological role, this protein binds specifically to 23S rRNA; its binding is stimulated by other ribosomal proteins, e.g. L4, L17, and L20. It is important during the early stages of 50S assembly. It makes multiple contacts with different domains of the 23S rRNA in the assembled 50S subunit and ribosome. The globular domain of the protein is located near the polypeptide exit tunnel on the outside of the subunit, while an extended beta-hairpin is found that lines the wall of the exit tunnel in the center of the 70S ribosome. The sequence is that of Large ribosomal subunit protein uL22 from Neisseria gonorrhoeae (strain ATCC 700825 / FA 1090).